The following is a 100-amino-acid chain: Small ribosomal subunit protein uS14c (100 aa).

This sequence belongs to the universal ribosomal protein uS14 family. In terms of assembly, part of the 30S ribosomal subunit.

It is found in the plastid. The protein resides in the chloroplast. Its function is as follows. Binds 16S rRNA, required for the assembly of 30S particles. The protein is Small ribosomal subunit protein uS14c of Lepidium virginicum (Virginia pepperweed).